The sequence spans 2767 residues: MSALLNEIQRILGDLQSGKAASRNKGIQQLDEKLSSCREDLDKLFLSKTSDISWTTIFEASKEALFKQAGNLEDVNEKVFKTLAGKNYLYDNVLEKITQFNLEAGSQTSGNGHFLAKTSIFSAFEDGIKMRVVVKYFGDRILSLLEKGIYSSVSYVRDLKINEYSRILSYLFELNVDMDEVLRTRILKCITRTVSLAKDRVQLHVDLVEYLPELSSFALSAFGARKTEIVRVYLIFASELAVNYNHQLNVHMQEILPKLCEYHDEDAFRDDTRNLFFQCVSKSLHSMYLKMDMCDFNTLGVPVHEKWPQTLLRLKTIVNVEIRKNSWARCKNALLSNNKFSDPFIKMSALAMYIVLWHLETKKADENGEGDAPKKIPKPADKMETIFSLIDKKENTFNDVWLAIFTEILQLSSVILNVANYQMALTTVAEIMQMYGNAKNLRNLRLCLAHLLTKEQELLHSKSIREDFLGELWSQMANQLISETTTNSEEIKEKQLVLQMLIRHNKLNQKLSSTLLNNIISNEMLKRNECLATIREIFIHADKCGQDKASADLEPIIAWAYGSADRFIAAQMIHNIDSIDAQLQADTFAISIINFLDVQQLRQISQSEHIVPSTERNLLAYKYNEQLICFDKDYATPFESITHIQSETKNCLIQSNYDCLMRGLNFEIAKENKPAAIIKNLNSLLKLICTMERLLHYKVFDADTYTGCPLIKRIGLYLSHIEFQLKANGAEILDKSDLPEILRLEIYVLDVFRTNLVLLDYLERQPIEMLVEFVGAALKLHSMQRERSVDADHGTITRLCLNILAGLCAYNSHRDEAFEHIVKVTMRWHPQDVLIVTKMLCSCQTISEASSSWLVSKLKTLFQQHHQDAELMDKVVQHMPTIFYFVRHKENHLDDMLMALNSLLRIAIKKSYTSNLTAKIVRCVGLIAQRCPDIYLLENFAVICKSTAKFITMPTLEVRFATLFTFTILLESNCVTSDAIGHSRTHWDFCQELYESIEFKKLTYNNEDAIQNSNALIVQMLIAIFLRSSFHQEIALKELLHHCALRRLTEREFISLQSMSSCHRQTVRDLIRPFAAILLHHWSSKRWPISKFPYFLCYSTKSEFRKTHASEIMAYTFLYGKTEDIERCSKSISEELALPILASFLLIKNSSCSESEGQNFKEHLQLLSENLSYSQLNATDVDLDLDILCYVISMLHDPQEMMRLFGSLAICNRTASWYSLSGESLFKCLNFHIDPEMRPSMDSRIQSMTTLQTKHSRVLVDIFGRLKTNCYSASFSSQALHDFFLYCEVADAVYDAARKNETIVTQCSFFVRDIWFFVVRLLIHTKFIRVQMAALTFLELLLNKHNFRLDDYQNHFGDIAKLLSNFQLCCEAKEVREKTMSIVMYILESKKGHINLNSFLEETTDCEFLKPLREDCKSSQPNIDRADVANYLRSFLLSPTPERLRDLRTYIAEHKDKVQEHEKLLFGVINKLIQMTRDAHNKTTSIDSLKCLAQIGPLKISTVSYYFQTDFEAFEKSNGEPMEAFLGVVCHSLDTSLFQFDPKTHEGLVSVAIQVVNSKPGSNIMERYKNLRIFADKSTASTFLHSNKQIRRIDWLSILKATKSLSYEPWMCAFVSKVFQMCGWLGFDKLAATSFAFAKTCLLPFIKLLLENSLEHVESLSQMLDYFFEGFTSSTAPNSQEIFRNKRAIKKFLHICEYIRIFNNWTIPINLSNVVMASNHCQAYFLSIMYLELWACSESPKSKADFLDNECFQDGAKKAYESIGCLDAIPGFVNPMRSRLDFLGHGSNLSTILLESDHLDRASGQLCIDIMKGNGLWSFAKLQQHQNIEPDYEIFWRLGQWDSLTDPKHQQNQTVVRTSLDLEQEFKRHHFVALRSIGQREEENSLSAIEQAYSCVRDILMEISVECLQSVYKYLTWLCSLQQAEDFCQIQFGTQLDPASTTKIFRKWQTELELKYGNFSCKEYVIAHQIALLKLAGTRASRRMSEFYQKDPISTYLMKGIEECKSAGKLNLAAKYTATLRELPNIRESIKISVLLEDAEINLKMGNQQIAKAILDYVTNNNEFVYCVQRVPALRMQGEFLLDCNAETLSWVQSHKFNNSLKLIDDFVQHRQTLSEKYRDIFDWHQLDAYASKQRTAAYATIAKYADREYQQLHDYRHSQEYQTLKDIIEQNRQTAEKVTQRENQDRRVISVQMKRYASLDEQQLNQIEEKLTEYLRLALTNYMAYCRLDSGFSSAAIYRIISLWFTNATSKQCQECIKDEILTVPSYKFICAANQLTARLNSKNTSLLKGLTDLLVQCGKDHPYHTFYQLYPLVFAHLDGENSNTERSGIARKIIAMICEKNGTAGECSKQLESLLPALITFANEGKTNDNRPVSDSVRNKQFDKVRRWRNLNAVHCPTLELPVMPSKEYSIISVVKWTNETTQCGGLNAPVKIMCVCSDGKIRAQLVKGKDDLRQDAVMQQVFGIVNELLNQDSEFIERKLKLRTYKVTPLSMRSGILEWCTNSVPVGHYLVVEGKGGAHARYRPNDWNNNKCRKLSSDHLKSPKETRYAIYKKICENIKPVFHYFLLEKFPIPGVWFERRLAYTNSVATTSMVGYVLGLGDRHTQNILVDQQTAEVIHIDFGIAFEQGKIQTTPETVPFRLTRDFVAPMGICGTKGVFAKSCEATMHILRRYKSVFTTILEVLLYDPLFIWGVLKKKQSPQQSGEESVNLVAQRALLLVQNKLDGREAGTMGDSNVEAQVERLINEATLPSNLCMLFPGWDPHL.

Residues 1713–2317 (NVVMASNHCQ…FYQLYPLVFA (605 aa)) form the FAT domain. One can recognise a PI3K/PI4K catalytic domain in the interval 2419–2734 (WTNETTQCGG…KLDGREAGTM (316 aa)). A G-loop region spans residues 2425–2431 (QCGGLNA). The segment at 2601-2609 (GLGDRHTQN) is catalytic loop. The activation loop stretch occupies residues 2621-2645 (HIDFGIAFEQGKIQTTPETVPFRLT). Positions 2735–2767 (GDSNVEAQVERLINEATLPSNLCMLFPGWDPHL) constitute an FATC domain.

This sequence belongs to the PI3/PI4-kinase family. ATM subfamily.

The protein localises to the nucleus. The protein resides in the chromosome. Its subcellular location is the telomere. It catalyses the reaction L-seryl-[protein] + ATP = O-phospho-L-seryl-[protein] + ADP + H(+). The enzyme catalyses L-threonyl-[protein] + ATP = O-phospho-L-threonyl-[protein] + ADP + H(+). Functionally, serine/threonine-protein kinase which recognizes the substrate consensus sequence [ST]-Q. Required to suppress spontaneous apoptosis of proliferating cells during development, and for their proper differentiation. Required for female fertility. Protects telomeres from fusion, maybe by recruiting or maintaining chromatin-modifying complexes such as Su(var)205/HP1. May activate checkpoint signaling in response to DNA double-stranded breaks induced by low-dose ionizing radiation. May phosphorylate histone H2AV. This Drosophila melanogaster (Fruit fly) protein is Serine/threonine-protein kinase ATM (tefu).